We begin with the raw amino-acid sequence, 268 residues long: Centromere protein Q (268 aa).

A disordered region spans residues 1 to 31 (MSGKANASKKNFEQLKRNPKRKKDNEEVVLS). S31 bears the Phosphoserine mark. A coiled-coil region spans residues 170 to 203 (ELMTGNIQSLKNKIQILASEVEEEEERVKQIHQI). Position 249 is a phosphoserine (S249).

It belongs to the CENP-Q/OKP1 family. Component of the CENPA-CAD complex, composed of CENPI, CENPK, CENPL, CENPO, CENPP, CENPQ, CENPR and CENPS. The CENPA-CAD complex interacts with the CENPA-NAC complex, at least composed of CENPA, CENPC, CENPH, CENPM, CENPN, CENPT and CENPU.

The protein resides in the nucleus. It localises to the chromosome. Its subcellular location is the centromere. Component of the CENPA-CAD (nucleosome distal) complex, a complex recruited to centromeres which is involved in assembly of kinetochore proteins, mitotic progression and chromosome segregation. May be involved in incorporation of newly synthesized CENPA into centromeres via its interaction with the CENPA-NAC complex. Plays an important role in chromosome congression and in the recruitment of CENP-O complex (which comprises CENPO, CENPP, CENPQ and CENPU), CENPE and PLK1 to the kinetochores. In Macaca fascicularis (Crab-eating macaque), this protein is Centromere protein Q (CENPQ).